A 474-amino-acid chain; its full sequence is Tubulin gamma-2 chain (474 aa).

142–148 lines the GTP pocket; the sequence is AGGTGSG.

Belongs to the tubulin family. As to quaternary structure, gamma-tubulin complex is composed of gamma-tubulin and GCP proteins.

It localises to the cytoplasm. The protein resides in the cytoskeleton. It is found in the microtubule organizing center. The protein localises to the nucleus. Its subcellular location is the cell cortex. In terms of biological role, tubulin is the major constituent of microtubules. The gamma chain is found at microtubule organizing centers (MTOC) such as the spindle poles, suggesting that it is involved in the minus-end nucleation of microtubule assembly. Gamma-tubulin complex is essential for the control of microtubular network remodeling in the course of initiation and development of giant-feeding cells, and for the successful reproduction of nematodes (e.g. Meloidogyne spp.) in their plant hosts. The chain is Tubulin gamma-2 chain (TUBG2) from Arabidopsis thaliana (Mouse-ear cress).